A 590-amino-acid polypeptide reads, in one-letter code: (+)-sabinene synthase, chloroplastic (590 aa).

The transit peptide at 1–51 (MSSISINIAMPLNSLHNFERKPSKAWSTSCTAPAARLRASSSLQQEKPHQI) directs the protein to the chloroplast. Mg(2+) is bound by residues Asp343, Asp347, Asp487, Thr491, and Glu495. The DDXXD motif motif lies at 343-347 (DDVYD).

This sequence belongs to the terpene synthase family. In terms of assembly, monomer. It depends on Mg(2+) as a cofactor.

It is found in the plastid. The protein resides in the chloroplast. It catalyses the reaction (2E)-geranyl diphosphate = (1R,5R)-sabinene + diphosphate. It functions in the pathway terpene metabolism; sabinene hydrate biosynthesis. Functionally, catalyzes the formation of the (-)-3-isothujone precursor sabinene from geranyl diphosphate. The enzyme also produces significant amounts of gamma-terpinene, terpinolene and limonene. This is (+)-sabinene synthase, chloroplastic from Salvia officinalis (Sage).